A 556-amino-acid chain; its full sequence is MTMLKDPSKKYRAFPTIDLPDRTWPSKTIDAAPIWCSSDLRDGNQSLIEPMDAAKKLRFWKTLVSVGVKEIEASFPSASQTDFDFVRTLIEDGHIPDDTTIQVLTQAREDLIARTFESLRGAKKAIVHLYNATSPSFRRIVFNQDKAGVKEIAVNAAKLFVKYAAQQPETQWTFEYSPETFSATELEFAKEVCDAVIEVWNPTPENKVILNLPATVEVATPNIYADQIEWFGRNITRRDSVLISLHTHNDRGTGVAATELGLMAGADRVEGCLFGNGERTGNVDLVTVALNLYTQGIDPELDFSDIDGVRKVVEECNQIPVHPRHPYVGDLVHTAFSGSHQDAIRKGFTQQKDGELWEVPYLPIDPADIGRSYEAVIRVNSQSGKGGITYLLEQEYGISLPRRMQIEFSQVVQGETDRLGLEMSAQQIHSLLRREYLQANTPYALISHKLQEENGNSAVDAEVHVDGETQHWRGKGKGALEALVAGLPVAVEIMDYNEHAIGSGTTAKAAAYIELRVNGERAVHGVGIDENITTASFRALFSALNRSLSQTQAKAA.

The Pyruvate carboxyltransferase domain maps to 33-307; sequence PIWCSSDLRD…DPELDFSDID (275 aa). Mg(2+) contacts are provided by Asp42, His246, His248, and Asn282. The interval 439–556 is regulatory domain; the sequence is ANTPYALISH…SLSQTQAKAA (118 aa).

The protein belongs to the alpha-IPM synthase/homocitrate synthase family. LeuA type 2 subfamily. Homodimer. The cofactor is Mg(2+).

It localises to the cytoplasm. The catalysed reaction is 3-methyl-2-oxobutanoate + acetyl-CoA + H2O = (2S)-2-isopropylmalate + CoA + H(+). Its pathway is amino-acid biosynthesis; L-leucine biosynthesis; L-leucine from 3-methyl-2-oxobutanoate: step 1/4. Functionally, catalyzes the condensation of the acetyl group of acetyl-CoA with 3-methyl-2-oxobutanoate (2-ketoisovalerate) to form 3-carboxy-3-hydroxy-4-methylpentanoate (2-isopropylmalate). The protein is 2-isopropylmalate synthase of Pseudomonas savastanoi pv. phaseolicola (strain 1448A / Race 6) (Pseudomonas syringae pv. phaseolicola (strain 1448A / Race 6)).